Consider the following 110-residue polypeptide: Insulin (110 aa).

The signal sequence occupies residues 1 to 24 (MALWMRLLPLLVLLALWGPDPASA). Cystine bridges form between Cys31/Cys96, Cys43/Cys109, and Cys95/Cys100. A propeptide spans 57 to 87 (EAEDLQVGQVELGGGPGAGSLQPLALEGSLQ) (c peptide).

This sequence belongs to the insulin family. Heterodimer of a B chain and an A chain linked by two disulfide bonds.

It localises to the secreted. Its function is as follows. Insulin decreases blood glucose concentration. It increases cell permeability to monosaccharides, amino acids and fatty acids. It accelerates glycolysis, the pentose phosphate cycle, and glycogen synthesis in liver. This Pan troglodytes (Chimpanzee) protein is Insulin (INS).